A 219-amino-acid chain; its full sequence is Ras-related protein Rab-3D (219 aa).

Ala2 carries the post-translational modification N-acetylalanine. 29–37 (GNSSVGKTS) is a binding site for GDP. Residues Ser31, Ser32, Val33, Gly34, Lys35, Thr36, Ser37, Pro49, and Ser53 each contribute to the GTP site. Position 36 (Thr36) interacts with Mg(2+). A Switch 1 motif is present at residues 49-58 (PAFVSTVGID). Mg(2+) is bound by residues Thr54 and Asp77. Gly80 lines the GTP pocket. The short motif at 80–96 (GQERYRTITTAYYRGAM) is the Switch 2 element. The residue at position 86 (Thr86) is a Phosphothreonine; by LRRK2. Asn135, Lys136, Asp138, Ala166, and Lys167 together coordinate GTP. GDP contacts are provided by residues 135–138 (NKCD) and 165–167 (SAK). The residue at position 190 (Ser190) is a Phosphoserine. Residues 190-199 (SLEPSSSSGS) are compositionally biased toward low complexity. A disordered region spans residues 190 to 219 (SLEPSSSSGSNGKGPAVGDAPAPQPSSCSC). S-geranylgeranyl cysteine attachment occurs at residues Cys217 and Cys219. The residue at position 219 (Cys219) is a Cysteine methyl ester.

The protein belongs to the small GTPase superfamily. Rab family. In terms of assembly, interacts with RIMS1, RIMS2, RPH3A, RPH3AL and RAB3IP. The GTP-bound form interacts with REP15. Interacts with CHM and CHML; phosphorylation at Thr-86 disrupts these interactions. Interacts with MADD (via uDENN domain); the GTP-bound form is preferred for interaction. It depends on Mg(2+) as a cofactor. Post-translationally, phosphorylation of Thr-86 in the switch II region by LRRK2 prevents the association of RAB regulatory proteins, including CHM and CHML. In terms of tissue distribution, highly expressed in granulocytes of peripheral blood. Constitutively expressed at low levels in all hematopoietic cell lines investigated.

It localises to the cell membrane. The catalysed reaction is GTP + H2O = GDP + phosphate + H(+). Regulated by guanine nucleotide exchange factors (GEFs) which promote the exchange of bound GDP for free GTP. Regulated by GTPase activating proteins (GAPs) which increase the GTP hydrolysis activity. Inhibited by GDP dissociation inhibitors (GDIs) which prevent Rab-GDP dissociation. The small GTPases Rab are key regulators of intracellular membrane trafficking, from the formation of transport vesicles to their fusion with membranes. Rabs cycle between an inactive GDP-bound form and an active GTP-bound form that is able to recruit to membranes different sets of downstream effectors directly responsible for vesicle formation, movement, tethering and fusion. RAB3D may be involved in the insulin-induced exocytosis of GLUT4-containing vesicles in adipocytes. This Homo sapiens (Human) protein is Ras-related protein Rab-3D.